We begin with the raw amino-acid sequence, 424 residues long: UDP-sugar transporter protein SLC35A5 (424 aa).

Residues 1-8 lie on the Cytoplasmic side of the membrane; sequence MEKQCCSH. A helical transmembrane segment spans residues 9-29; that stretch reads PVICSLSTMYTFLLGAIFIAL. The Lumenal portion of the chain corresponds to 30–53; the sequence is SSSRILLVKYSANEENKYDYLPTT. The helical transmembrane segment at 54–74 threads the bilayer; it reads VNVCSELVKLVFCVLVSFCVI. At 75–93 the chain is on the cytoplasmic side; sequence KKDHQSRNLKYASWKEFSD. Residues 94 to 116 traverse the membrane as a helical segment; sequence FMKWSIPAFLYFLDNLIVFYVLS. The Lumenal segment spans residues 117 to 119; the sequence is YLQ. Residues 120 to 142 form a helical membrane-spanning segment; that stretch reads PAMAVIFSNFSIITTALLFRIVL. At 143 to 147 the chain is on the cytoplasmic side; that stretch reads KRRLN. The helical transmembrane segment at 148–168 threads the bilayer; it reads WIQWASLLTLFLSIVALTAGT. At 169–228 the chain is on the lumenal side; sequence KTLQHNLAGRGFHHDAFFSPSNSCLLFRSECPRKDNCTAKEWTFPEAKWNTTARVFSHIR. N-linked (GlcNAc...) asparagine glycosylation occurs at Asn-204. A helical transmembrane segment spans residues 229-249; it reads LGMGHVLIIVQCFISSMANIY. Residues 250–263 lie on the Cytoplasmic side of the membrane; the sequence is NEKILKEGNQLTES. A helical transmembrane segment spans residues 264–284; it reads IFIQNSKLYFFGILFNGLTLG. Topologically, residues 285 to 303 are lumenal; it reads LQRSNRDQIKNCGFFYGHS. A helical transmembrane segment spans residues 304-324; the sequence is AFSVALIFVTAFQGLSVAFIL. The Cytoplasmic portion of the chain corresponds to 325 to 330; sequence KFLDNM. A helical membrane pass occupies residues 331–351; sequence FHVLMAQVTTVIITTVSVLVF. Over 352–354 the chain is Lumenal; sequence DFR. Residues 355-375 form a helical membrane-spanning segment; it reads PSLEFFLEAPSVLLSIFIYNA. Topologically, residues 376-424 are cytoplasmic; the sequence is SKPQVPEYAPRQERIRDLSGNLWERSSGDGEELERLTKPKSDESDEDTF. Phosphoserine is present on residues Ser-394, Ser-416, and Ser-419. Positions 397 to 424 are disordered; it reads LWERSSGDGEELERLTKPKSDESDEDTF. The segment covering 408–417 has biased composition (basic and acidic residues); sequence LERLTKPKSD.

Belongs to the nucleotide-sugar transporter family. SLC35A subfamily. In terms of assembly, probably forms homooligomers and heterooligomers with SLC35A1, SLC35A2, SLC35A3 and SLC35A4.

Its subcellular location is the golgi apparatus membrane. The enzyme catalyses UMP(out) + UDP-alpha-D-glucuronate(in) = UMP(in) + UDP-alpha-D-glucuronate(out). The catalysed reaction is UMP(out) + UDP-N-acetyl-alpha-D-glucosamine(in) = UMP(in) + UDP-N-acetyl-alpha-D-glucosamine(out). It catalyses the reaction UDP-N-acetyl-alpha-D-galactosamine(in) + UMP(out) = UDP-N-acetyl-alpha-D-galactosamine(out) + UMP(in). Functionally, probable UDP-sugar:UMP transmembrane antiporter involved in UDP-alpha-D-glucuronate/UDP-GlcA, UDP-GlcNAc/UDP-N-acetyl-alpha-D-glucosamine and UDP-N-acetyl-alpha-D-galactosamine/UDP-GalNAc transport from the cytosol to the lumen of the Golgi. This chain is UDP-sugar transporter protein SLC35A5, found in Homo sapiens (Human).